The following is a 170-amino-acid chain: CDP-archaeol synthase (170 aa).

5 helical membrane-spanning segments follow: residues 6–26 (LLWAFWYILPAYFANASPVLV), 53–73 (GLIGGVAIGTAVGALQYFITP), 83–103 (LLLAFLLSFGALFGDLVGSFF), 114–134 (PAIGLDQLGFLISALAFAYPV), and 140–160 (GQIIFLLVVSPFVHWGANYFA).

This sequence belongs to the CDP-archaeol synthase family. Mg(2+) is required as a cofactor.

The protein localises to the cell membrane. The enzyme catalyses 2,3-bis-O-(geranylgeranyl)-sn-glycerol 1-phosphate + CTP + H(+) = CDP-2,3-bis-O-(geranylgeranyl)-sn-glycerol + diphosphate. It functions in the pathway membrane lipid metabolism; glycerophospholipid metabolism. In terms of biological role, catalyzes the formation of CDP-2,3-bis-(O-geranylgeranyl)-sn-glycerol (CDP-archaeol) from 2,3-bis-(O-geranylgeranyl)-sn-glycerol 1-phosphate (DGGGP) and CTP. This reaction is the third ether-bond-formation step in the biosynthesis of archaeal membrane lipids. In Thermococcus onnurineus (strain NA1), this protein is CDP-archaeol synthase.